The sequence spans 283 residues: Movement protein (283 aa).

A disordered region spans residues 233 to 283 (SVKRTKSENTPGKRRVNVDSVSLGLGKGKSVSAKNEDTESVFDDGILDSDS). Positions 270–283 (TESVFDDGILDSDS) are enriched in acidic residues.

This sequence belongs to the tobamovirus movement protein family.

It localises to the host cytoplasm. The protein localises to the host cytoskeleton. It is found in the host cell junction. The protein resides in the host plasmodesma. Functionally, transports viral genome to neighboring plant cells directly through plasmosdesmata, without any budding. The movement protein allows efficient cell to cell propagation, by bypassing the host cell wall barrier. Forms a ribonucleoprotein complex with viral RNA. Binds microtubules and modulates microtubule stability. Can bind double-stranded DNA. This chain is Movement protein (MP), found in Crotalaria juncea (Sunn hemp).